The chain runs to 549 residues: Chaperonin GroEL (549 aa).

Residues 30–33, Lys51, 87–91, Gly415, and Asp495 contribute to the ATP site; these read TLGP and DGTTT.

Belongs to the chaperonin (HSP60) family. In terms of assembly, forms a cylinder of 14 subunits composed of two heptameric rings stacked back-to-back. Interacts with the co-chaperonin GroES.

Its subcellular location is the cytoplasm. The enzyme catalyses ATP + H2O + a folded polypeptide = ADP + phosphate + an unfolded polypeptide.. Together with its co-chaperonin GroES, plays an essential role in assisting protein folding. The GroEL-GroES system forms a nano-cage that allows encapsulation of the non-native substrate proteins and provides a physical environment optimized to promote and accelerate protein folding. In Colwellia maris, this protein is Chaperonin GroEL.